Reading from the N-terminus, the 311-residue chain is N-acetylmuramic acid 6-phosphate etherase (311 aa).

An SIS domain is found at isoleucine 64–lysine 227. The Proton donor role is filled by glutamate 92. Residue glutamate 123 is part of the active site.

The protein belongs to the GCKR-like family. MurNAc-6-P etherase subfamily. In terms of assembly, homodimer.

It catalyses the reaction N-acetyl-D-muramate 6-phosphate + H2O = N-acetyl-D-glucosamine 6-phosphate + (R)-lactate. It participates in amino-sugar metabolism; N-acetylmuramate degradation. Functionally, specifically catalyzes the cleavage of the D-lactyl ether substituent of MurNAc 6-phosphate, producing GlcNAc 6-phosphate and D-lactate. This chain is N-acetylmuramic acid 6-phosphate etherase, found in Prochlorococcus marinus (strain SARG / CCMP1375 / SS120).